Here is a 488-residue protein sequence, read N- to C-terminus: Glutamyl-tRNA(Gln) amidotransferase subunit A (488 aa).

Catalysis depends on charge relay system residues lysine 77 and serine 152. Serine 176 acts as the Acyl-ester intermediate in catalysis.

The protein belongs to the amidase family. GatA subfamily. In terms of assembly, heterotrimer of A, B and C subunits.

It carries out the reaction L-glutamyl-tRNA(Gln) + L-glutamine + ATP + H2O = L-glutaminyl-tRNA(Gln) + L-glutamate + ADP + phosphate + H(+). In terms of biological role, allows the formation of correctly charged Gln-tRNA(Gln) through the transamidation of misacylated Glu-tRNA(Gln) in organisms which lack glutaminyl-tRNA synthetase. The reaction takes place in the presence of glutamine and ATP through an activated gamma-phospho-Glu-tRNA(Gln). This is Glutamyl-tRNA(Gln) amidotransferase subunit A from Streptococcus pyogenes serotype M6 (strain ATCC BAA-946 / MGAS10394).